The following is a 642-amino-acid chain: ATP-dependent zinc metalloprotease FtsH (642 aa).

The Cytoplasmic portion of the chain corresponds to 1 to 6; it reads MGRFTK. Residues 7 to 27 form a helical membrane-spanning segment; that stretch reads NIVLYLLIIAAFVIAIDAFSG. The Extracellular segment spans residues 28–101; that stretch reads QSANKSELSY…TAAPPEQPAW (74 aa). A helical transmembrane segment spans residues 102-122; it reads WMSLLGSAIPIIILVVLFFFI. Topologically, residues 123–642 are cytoplasmic; it reads MQQTQGGGGR…LSEASSNEIK (520 aa). 194–201 provides a ligand contact to ATP; that stretch reads GPPGTGKT. H416 is a binding site for Zn(2+). Residue E417 is part of the active site. The Zn(2+) site is built by H420 and D492. Positions 597–610 are enriched in basic and acidic residues; sequence TTKEPEAEEPKVAS. The disordered stretch occupies residues 597–642; the sequence is TTKEPEAEEPKVASEADSSIVPEGVDAKKTTSTVADLSEASSNEIK. Over residues 626–642 the composition is skewed to polar residues; it reads TTSTVADLSEASSNEIK.

This sequence in the central section; belongs to the AAA ATPase family. The protein in the C-terminal section; belongs to the peptidase M41 family. Homohexamer. It depends on Zn(2+) as a cofactor.

The protein resides in the cell membrane. Functionally, acts as a processive, ATP-dependent zinc metallopeptidase for both cytoplasmic and membrane proteins. Plays a role in the quality control of integral membrane proteins. This Veillonella parvula (strain ATCC 10790 / DSM 2008 / CCUG 5123 / JCM 12972 / NCTC 11810 / Te3) (Veillonella alcalescens) protein is ATP-dependent zinc metalloprotease FtsH.